We begin with the raw amino-acid sequence, 512 residues long: Putative ankyrin repeat protein FPV233 (512 aa).

ANK repeat units follow at residues 45-73 (IPFI…NVNQ), 77-106 (DDTY…QCSV), 136-168 (IQDI…DINM), 172-201 (HGNS…NPNI), 205-236 (TNKS…NTDP), 238-262 (LSHA…SINA), 266-296 (YGNT…DVNA), and 301-329 (RNLT…DINS).

This Vertebrata (FPV) protein is Putative ankyrin repeat protein FPV233.